The following is a 498-amino-acid chain: ATP synthase subunit beta, chloroplastic (498 aa).

G172–T179 contributes to the ATP binding site.

Belongs to the ATPase alpha/beta chains family. F-type ATPases have 2 components, CF(1) - the catalytic core - and CF(0) - the membrane proton channel. CF(1) has five subunits: alpha(3), beta(3), gamma(1), delta(1), epsilon(1). CF(0) has four main subunits: a(1), b(1), b'(1) and c(9-12).

Its subcellular location is the plastid. The protein resides in the chloroplast thylakoid membrane. It carries out the reaction ATP + H2O + 4 H(+)(in) = ADP + phosphate + 5 H(+)(out). Functionally, produces ATP from ADP in the presence of a proton gradient across the membrane. The catalytic sites are hosted primarily by the beta subunits. The sequence is that of ATP synthase subunit beta, chloroplastic from Phoenix dactylifera (Date palm).